A 200-amino-acid chain; its full sequence is Holliday junction branch migration complex subunit RuvA (200 aa).

The interval 1 to 65 is domain I; sequence MYEYIKGTLT…ETEHVLYGFS (65 aa). A domain II region spans residues 66-144; sequence SRAERECFRL…TLMPLYLEEP (79 aa). The flexible linker stretch occupies residues 145–149; the sequence is VVPSS. Positions 150–200 are domain III; sequence TANSSFKEGIGALMNLGFSRLAADRMMTEAVKELSEEASVAELLPIALRKS.

Belongs to the RuvA family. In terms of assembly, homotetramer. Forms an RuvA(8)-RuvB(12)-Holliday junction (HJ) complex. HJ DNA is sandwiched between 2 RuvA tetramers; dsDNA enters through RuvA and exits via RuvB. An RuvB hexamer assembles on each DNA strand where it exits the tetramer. Each RuvB hexamer is contacted by two RuvA subunits (via domain III) on 2 adjacent RuvB subunits; this complex drives branch migration. In the full resolvosome a probable DNA-RuvA(4)-RuvB(12)-RuvC(2) complex forms which resolves the HJ.

It is found in the cytoplasm. In terms of biological role, the RuvA-RuvB-RuvC complex processes Holliday junction (HJ) DNA during genetic recombination and DNA repair, while the RuvA-RuvB complex plays an important role in the rescue of blocked DNA replication forks via replication fork reversal (RFR). RuvA specifically binds to HJ cruciform DNA, conferring on it an open structure. The RuvB hexamer acts as an ATP-dependent pump, pulling dsDNA into and through the RuvAB complex. HJ branch migration allows RuvC to scan DNA until it finds its consensus sequence, where it cleaves and resolves the cruciform DNA. The chain is Holliday junction branch migration complex subunit RuvA from Chlamydia trachomatis serovar D (strain ATCC VR-885 / DSM 19411 / UW-3/Cx).